The chain runs to 632 residues: Putative ferric transport system permease protein FbpB 1 (632 aa).

15 helical membrane passes run 5–25 (SFNLTWAWFLPVIVYGALPLL), 37–57 (LFLTALSVLFMFISATVYKIS), 58–78 (MGYSVIVLLVGYTALATLSLA), 93–113 (LLCIILLIFFFIVYPTLAIFV), 144–164 (LFLSGFVGIVSTVFGLAFALY), 178–198 (IFSILPIVTPPFVVGLGVTLM), 223–243 (GFNGIAIAQILAFAPISFMIL), 270–290 (YQIIFPLLRPALANSFLIVFI), 299–319 (PLVLGGSFDVIATQIYFYIAG), 330–350 (LGSMLLIFSLAIFIIQYIWIG), 377–397 (IIGMLGFWVIFNMALYGSIFY), 436–456 (IYAGIAAPLTAFFGLLIAYIV), 469–489 (FLTMLCFAVPGTVAGVSYILA), 490–510 (FNNAPLYITGTGIIVIISMVM), and 547–567 (CFIVLPLLKPALLSALVTSFV). Residues 140–345 (ITNSLFLSGF…IFSLAIFIIQ (206 aa)) enclose the ABC transmembrane type-1 1 domain. The ABC transmembrane type-1 2 domain maps to 431 to 632 (LINTLIYAGI…DCRRYAYFPF (202 aa)).

Belongs to the binding-protein-dependent transport system permease family. FbpB subfamily. In terms of assembly, the complex is composed of two ATP-binding proteins (FbpC), two transmembrane proteins (FbpB) and a solute-binding protein (FbpA).

It localises to the cell inner membrane. In terms of biological role, part of the ABC transporter complex FbpABC (TC 3.A.1.10.1) involved in Fe(3+) ions import. Probably responsible for the translocation of the substrate across the membrane. This chain is Putative ferric transport system permease protein FbpB 1 (fbpB1), found in Haemophilus influenzae (strain ATCC 51907 / DSM 11121 / KW20 / Rd).